The chain runs to 275 residues: tRNA pseudouridine synthase A (275 aa).

Aspartate 56 functions as the Nucleophile in the catalytic mechanism. A substrate-binding site is contributed by tyrosine 110.

This sequence belongs to the tRNA pseudouridine synthase TruA family.

The enzyme catalyses uridine(38/39/40) in tRNA = pseudouridine(38/39/40) in tRNA. In terms of biological role, formation of pseudouridine at positions 38, 39 and 40 in the anticodon stem and loop of transfer RNAs. The chain is tRNA pseudouridine synthase A from Haloarcula marismortui (strain ATCC 43049 / DSM 3752 / JCM 8966 / VKM B-1809) (Halobacterium marismortui).